We begin with the raw amino-acid sequence, 379 residues long: Queuine tRNA-ribosyltransferase (379 aa).

Asp-94 functions as the Proton acceptor in the catalytic mechanism. Residues Asp-94–Phe-98, Asp-148, Gln-191, and Gly-218 contribute to the substrate site. The RNA binding stretch occupies residues Gly-249–Ala-255. The active-site Nucleophile is the Asp-268. An RNA binding; important for wobble base 34 recognition region spans residues Thr-273–Arg-277. The Zn(2+) site is built by Cys-306, Cys-308, Cys-311, and His-337.

It belongs to the queuine tRNA-ribosyltransferase family. In terms of assembly, homodimer. Within each dimer, one monomer is responsible for RNA recognition and catalysis, while the other monomer binds to the replacement base PreQ1. Zn(2+) serves as cofactor.

The enzyme catalyses 7-aminomethyl-7-carbaguanine + guanosine(34) in tRNA = 7-aminomethyl-7-carbaguanosine(34) in tRNA + guanine. It functions in the pathway tRNA modification; tRNA-queuosine biosynthesis. Functionally, catalyzes the base-exchange of a guanine (G) residue with the queuine precursor 7-aminomethyl-7-deazaguanine (PreQ1) at position 34 (anticodon wobble position) in tRNAs with GU(N) anticodons (tRNA-Asp, -Asn, -His and -Tyr). Catalysis occurs through a double-displacement mechanism. The nucleophile active site attacks the C1' of nucleotide 34 to detach the guanine base from the RNA, forming a covalent enzyme-RNA intermediate. The proton acceptor active site deprotonates the incoming PreQ1, allowing a nucleophilic attack on the C1' of the ribose to form the product. After dissociation, two additional enzymatic reactions on the tRNA convert PreQ1 to queuine (Q), resulting in the hypermodified nucleoside queuosine (7-(((4,5-cis-dihydroxy-2-cyclopenten-1-yl)amino)methyl)-7-deazaguanosine). This chain is Queuine tRNA-ribosyltransferase, found in Staphylococcus aureus (strain bovine RF122 / ET3-1).